Reading from the N-terminus, the 997-residue chain is Phosphoenolpyruvate carboxylase (997 aa).

The disordered stretch occupies residues 1–67 (MKSSGSARTA…KPAARTREDK (67 aa)). Catalysis depends on residues His207 and Lys649.

It belongs to the PEPCase type 1 family. Mg(2+) is required as a cofactor.

It carries out the reaction oxaloacetate + phosphate = phosphoenolpyruvate + hydrogencarbonate. In terms of biological role, forms oxaloacetate, a four-carbon dicarboxylic acid source for the tricarboxylic acid cycle. The sequence is that of Phosphoenolpyruvate carboxylase from Burkholderia vietnamiensis (strain G4 / LMG 22486) (Burkholderia cepacia (strain R1808)).